We begin with the raw amino-acid sequence, 1524 residues long: DNA-directed RNA polymerase subunit beta' (1524 aa).

Zn(2+) contacts are provided by Cys-58, Cys-60, Cys-73, and Cys-76. 3 residues coordinate Mg(2+): Asp-739, Asp-741, and Asp-743. Cys-1112, Cys-1194, Cys-1201, and Cys-1204 together coordinate Zn(2+). The segment at 1502-1524 (AVEAKEKEAPRRPVRREQPGKGL) is disordered.

Belongs to the RNA polymerase beta' chain family. In terms of assembly, the RNAP catalytic core consists of 2 alpha, 1 beta, 1 beta' and 1 omega subunit. When a sigma factor is associated with the core the holoenzyme is formed, which can initiate transcription. It depends on Mg(2+) as a cofactor. The cofactor is Zn(2+).

The catalysed reaction is RNA(n) + a ribonucleoside 5'-triphosphate = RNA(n+1) + diphosphate. DNA-dependent RNA polymerase catalyzes the transcription of DNA into RNA using the four ribonucleoside triphosphates as substrates. The sequence is that of DNA-directed RNA polymerase subunit beta' from Thermus aquaticus.